Here is a 229-residue protein sequence, read N- to C-terminus: tRNA (guanine-N(7)-)-methyltransferase (229 aa).

S-adenosyl-L-methionine contacts are provided by Glu-62, Glu-87, Asp-114, and Asp-137. Asp-137 is a catalytic residue. Lys-141 is a binding site for substrate. Residues 143–148 (KHNKRR) form an interaction with RNA region. Substrate is bound by residues Asp-173 and 208-211 (TKFE).

It belongs to the class I-like SAM-binding methyltransferase superfamily. TrmB family.

The catalysed reaction is guanosine(46) in tRNA + S-adenosyl-L-methionine = N(7)-methylguanosine(46) in tRNA + S-adenosyl-L-homocysteine. It participates in tRNA modification; N(7)-methylguanine-tRNA biosynthesis. In terms of biological role, catalyzes the formation of N(7)-methylguanine at position 46 (m7G46) in tRNA. The polypeptide is tRNA (guanine-N(7)-)-methyltransferase (Francisella tularensis subsp. novicida (strain U112)).